We begin with the raw amino-acid sequence, 67 residues long: DNA-directed RNA polymerase subunit omega (67 aa).

The protein belongs to the RNA polymerase subunit omega family. In terms of assembly, RNAP is composed of a core of 2 alpha, a beta and a beta' subunit. The core is associated with a delta subunit, and at least one of epsilon or omega. When a sigma factor is associated with the core the holoenzyme is formed, which can initiate transcription.

The enzyme catalyses RNA(n) + a ribonucleoside 5'-triphosphate = RNA(n+1) + diphosphate. Promotes RNA polymerase assembly. Latches the N- and C-terminal regions of the beta' subunit thereby facilitating its interaction with the beta and alpha subunits. In vitro reconstitution experiments this subunit is dispensible. The protein is DNA-directed RNA polymerase subunit omega (rpoZ) of Bacillus subtilis (strain 168).